The primary structure comprises 295 residues: GTPase Era (295 aa).

The 170-residue stretch at 7–176 (KTISVCIIGR…IKSKAKVSPW (170 aa)) folds into the Era-type G domain. The segment at 15–22 (GRPNSGKS) is G1. A GTP-binding site is contributed by 15–22 (GRPNSGKS). The segment at 41-45 (QTTRS) is G2. Residues 62 to 65 (DTPG) form a G3 region. Residues 62–66 (DTPGI) and 124–127 (NKID) each bind GTP. The G4 stretch occupies residues 124–127 (NKID). Residues 152-154 (ISA) are G5. The KH type-2 domain maps to 204 to 281 (LQQELPYKLT…HLFLFVKVHA (78 aa)).

It belongs to the TRAFAC class TrmE-Era-EngA-EngB-Septin-like GTPase superfamily. Era GTPase family. In terms of assembly, monomer.

It localises to the cytoplasm. The protein resides in the cell inner membrane. An essential GTPase that binds both GDP and GTP, with rapid nucleotide exchange. Plays a role in 16S rRNA processing and 30S ribosomal subunit biogenesis and possibly also in cell cycle regulation and energy metabolism. The protein is GTPase Era of Rickettsia prowazekii (strain Madrid E).